The primary structure comprises 140 residues: MKIINILFCLFLLMLNGCNSNDTNNSQTKSRQKRDLTQKEATQEKPKSKEELLREKLNDNQKTHLDWLKEALGNDGEFNKFLGYDESKIKSALDHIKSELDSCTGDKVENKNTFKQVVQEALKGGIDGFENTASSTCKNS.

Residues 1 to 17 (MKIINILFCLFLLMLNG) form the signal peptide. The N-palmitoyl cysteine moiety is linked to residue C18. The S-diacylglycerol cysteine moiety is linked to residue C18. Residues 22 to 53 (DTNNSQTKSRQKRDLTQKEATQEKPKSKEELL) are disordered. Residues 33–53 (KRDLTQKEATQEKPKSKEELL) are compositionally biased toward basic and acidic residues.

The protein belongs to the Multicopy lipoprotein (Mlp) family.

It localises to the cell outer membrane. Functionally, an outer membrane protein that may participate in pathogenesis. Some human Lyme disease patients have antibodies against this protein. The Mlp proteins probably undergo intragenic recombination, generating new alleles. This Borreliella burgdorferi (strain ATCC 35210 / DSM 4680 / CIP 102532 / B31) (Borrelia burgdorferi) protein is Lipoprotein MlpD.